A 152-amino-acid polypeptide reads, in one-letter code: MTEYKKVIAQNKKALFNYFIEERLEAGIVLKGSEVQSLRQGKASIEESHAADTGHEVFLYNCHIAEYEKANRFNHATRRPRKLLLHTKEIKKIIGRIRIKGYTLVALSMYFNKKNKVKVELGIAKGKKLRDKRESIKEKNWKRDQSRLIRQK.

The protein belongs to the SmpB family.

Its subcellular location is the cytoplasm. In terms of biological role, required for rescue of stalled ribosomes mediated by trans-translation. Binds to transfer-messenger RNA (tmRNA), required for stable association of tmRNA with ribosomes. tmRNA and SmpB together mimic tRNA shape, replacing the anticodon stem-loop with SmpB. tmRNA is encoded by the ssrA gene; the 2 termini fold to resemble tRNA(Ala) and it encodes a 'tag peptide', a short internal open reading frame. During trans-translation Ala-aminoacylated tmRNA acts like a tRNA, entering the A-site of stalled ribosomes, displacing the stalled mRNA. The ribosome then switches to translate the ORF on the tmRNA; the nascent peptide is terminated with the 'tag peptide' encoded by the tmRNA and targeted for degradation. The ribosome is freed to recommence translation, which seems to be the essential function of trans-translation. The chain is SsrA-binding protein from Rickettsia montanensis.